The sequence spans 497 residues: Glycerol kinase (497 aa).

ADP is bound at residue T11. 3 residues coordinate ATP: T11, S12, and S13. T11 provides a ligand contact to sn-glycerol 3-phosphate. R15 is a binding site for ADP. The sn-glycerol 3-phosphate site is built by R81, E82, Y133, and D242. 5 residues coordinate glycerol: R81, E82, Y133, D242, and Q243. Positions 264 and 307 each coordinate ADP. The ATP site is built by T264, G307, Q311, and G412. The ADP site is built by G412 and N416.

It belongs to the FGGY kinase family.

The enzyme catalyses glycerol + ATP = sn-glycerol 3-phosphate + ADP + H(+). It functions in the pathway polyol metabolism; glycerol degradation via glycerol kinase pathway; sn-glycerol 3-phosphate from glycerol: step 1/1. Inhibited by fructose 1,6-bisphosphate (FBP). Functionally, key enzyme in the regulation of glycerol uptake and metabolism. Catalyzes the phosphorylation of glycerol to yield sn-glycerol 3-phosphate. The sequence is that of Glycerol kinase from Leptothrix cholodnii (strain ATCC 51168 / LMG 8142 / SP-6) (Leptothrix discophora (strain SP-6)).